Reading from the N-terminus, the 348-residue chain is Short-wave-sensitive opsin 1 (348 aa).

Over 1-33 (MRKMSEEEFYLFKNISSVGPWDGPQYHIAPVWA) the chain is Extracellular. N-linked (GlcNAc...) asparagine glycosylation occurs at asparagine 14. The chain crosses the membrane as a helical span at residues 34–58 (FYLQAAFMGTVFLIGFPLNAMVLVA). At 59–70 (TLRYKKLRQPLN) the chain is on the cytoplasmic side. Residues 71–96 (YILVNVSFGGFLLCIFSVFPVFVASC) traverse the membrane as a helical segment. Over 97–110 (NGYFVFGRHVCALE) the chain is Extracellular. A disulfide bond links cysteine 107 and cysteine 184. A helical membrane pass occupies residues 111–130 (GFLGTVAGLVTGWSLAFLAF). Residues 131–149 (ERYIVICKPFGNFRFSSKH) lie on the Cytoplasmic side of the membrane. Residues 150 to 173 (ALTVVLATWTIGIGVSIPPFFGWS) form a helical membrane-spanning segment. Residues 174–199 (RFIPEGLQCSCGPDWYTVGTKYRSES) lie on the Extracellular side of the membrane. The helical transmembrane segment at 200–227 (YTWFLFIFCFIVPLSLICFSYTQLLRAL) threads the bilayer. Residues 228–249 (KAVAAQQQESATTQKAEREVSR) are Cytoplasmic-facing. The helical transmembrane segment at 250 to 273 (MVVVMVGSFCVCYVPYAAFAMYMV) threads the bilayer. Residues 274-281 (NNRNHGLD) are Extracellular-facing. A helical membrane pass occupies residues 282–306 (LRLVTIPSFFSKSACIYNPIIYCFM). Lysine 293 carries the post-translational modification N6-(retinylidene)lysine. The Cytoplasmic portion of the chain corresponds to 307–348 (NKQFQACIMKMVCGKAMTDESDTCSSQKTEVSTVSSTQVGPN).

It belongs to the G-protein coupled receptor 1 family. Opsin subfamily. Phosphorylated on some or all of the serine and threonine residues present in the C-terminal region.

Its subcellular location is the cell membrane. The protein resides in the photoreceptor inner segment. It localises to the cell projection. The protein localises to the cilium. It is found in the photoreceptor outer segment. Its subcellular location is the cytoplasm. The protein resides in the perinuclear region. Its function is as follows. Visual pigments are the light-absorbing molecules that mediate vision. They consist of an apoprotein, opsin, covalently linked to cis-retinal. Required for the maintenance of cone outer segment organization in the ventral retina, but not essential for the maintenance of functioning cone photoreceptors. Involved in ensuring correct abundance and localization of retinal membrane proteins. May increase spectral sensitivity in dim light. This chain is Short-wave-sensitive opsin 1 (OPN1SW), found in Pan paniscus (Pygmy chimpanzee).